A 439-amino-acid chain; its full sequence is tRNA-2-methylthio-N(6)-dimethylallyladenosine synthase (439 aa).

The MTTase N-terminal domain maps to 2–119 (KYIYIKTWGC…LAQMIDKVEK (118 aa)). The [4Fe-4S] cluster site is built by cysteine 11, cysteine 48, cysteine 82, cysteine 156, cysteine 160, and cysteine 163. Residues 142–374 (KKTGYTASIS…QNCINKQTMS (233 aa)) form the Radical SAM core domain. Residues 377–439 (RKMLKSTQSV…HTHSLQGELI (63 aa)) form the TRAM domain.

Belongs to the methylthiotransferase family. MiaB subfamily. In terms of assembly, monomer. [4Fe-4S] cluster serves as cofactor.

It is found in the cytoplasm. It carries out the reaction N(6)-dimethylallyladenosine(37) in tRNA + (sulfur carrier)-SH + AH2 + 2 S-adenosyl-L-methionine = 2-methylsulfanyl-N(6)-dimethylallyladenosine(37) in tRNA + (sulfur carrier)-H + 5'-deoxyadenosine + L-methionine + A + S-adenosyl-L-homocysteine + 2 H(+). Catalyzes the methylthiolation of N6-(dimethylallyl)adenosine (i(6)A), leading to the formation of 2-methylthio-N6-(dimethylallyl)adenosine (ms(2)i(6)A) at position 37 in tRNAs that read codons beginning with uridine. The polypeptide is tRNA-2-methylthio-N(6)-dimethylallyladenosine synthase (Buchnera aphidicola subsp. Schizaphis graminum (strain Sg)).